The primary structure comprises 122 residues: Large ribosomal subunit protein uL14 (122 aa).

It belongs to the universal ribosomal protein uL14 family. In terms of assembly, part of the 50S ribosomal subunit. Forms a cluster with proteins L3 and L19. In the 70S ribosome, L14 and L19 interact and together make contacts with the 16S rRNA in bridges B5 and B8.

Functionally, binds to 23S rRNA. Forms part of two intersubunit bridges in the 70S ribosome. The polypeptide is Large ribosomal subunit protein uL14 (Chlorobium phaeobacteroides (strain DSM 266 / SMG 266 / 2430)).